Reading from the N-terminus, the 688-residue chain is Thyroid hormone-induced protein B (688 aa).

The N-terminal stretch at 1–20 (MMLSHWVLLLSLGAVWLAEG) is a signal peptide. 4 consecutive MAM domains span residues 26-169 (GSCT…GYCI), 170-330 (ECDF…SCSG), 341-500 (AGCD…SCKI), and 509-669 (GKCT…PCND). N32 and N135 each carry an N-linked (GlcNAc...) asparagine glycan. Residues N358 and N668 are each glycosylated (N-linked (GlcNAc...) asparagine).

The protein localises to the membrane. The protein resides in the secreted. Its subcellular location is the extracellular space. The protein is Thyroid hormone-induced protein B of Xenopus laevis (African clawed frog).